The primary structure comprises 329 residues: tRNA pseudouridine synthase B (329 aa).

Catalysis depends on Asp-42, which acts as the Nucleophile.

It belongs to the pseudouridine synthase TruB family. Type 1 subfamily.

It carries out the reaction uridine(55) in tRNA = pseudouridine(55) in tRNA. Responsible for synthesis of pseudouridine from uracil-55 in the psi GC loop of transfer RNAs. The sequence is that of tRNA pseudouridine synthase B from Lactococcus lactis subsp. lactis (strain IL1403) (Streptococcus lactis).